A 453-amino-acid chain; its full sequence is MNPNQKIITIGSICMVVGIISLILQIGNIISIWISHSIQTGNQNHTGICNQGIITYNVVAGQDSTSVILTGNSSLCPIRGWAIHSKDNGIRIGSKGDVFVIREPFISCSHLECRTFFLTQGALLNDKHSNGTVKDRSPYRALMSCPVGEAPSPYNSRFESVAWSASACHDGMGWLTIGISGPDNGAVAVLKYNGIITETIKSWRKKILRTQESECTCVNGSCFTIMTDGPSNGLASYKIFKIEKGKVTKSIELNAPNSHYEECSCYPDTGKVMCVCRDNWHGSNRPWVSFDQNLDYQIGYICSGVFGDNPRPKDGPGSCGPVSADGANGVKGFSYRYGNGVWIGRTKSDSSRHGFEMIWDPNGWTETDSRFSVRQDVVAMTDRSGYSGSFVQHPELTGLDCMRPCFWVELIRGRPEEETIWTSGSIISFCGVNSDTVDWSWPDGAELPFTIDK.

The Intravirion portion of the chain corresponds to 1-6; sequence MNPNQK. The chain crosses the membrane as a helical span at residues 7–27; sequence IITIGSICMVVGIISLILQIG. An involved in apical transport and lipid raft association region spans residues 11-33; that stretch reads GSICMVVGIISLILQIGNIISIW. Residues 28 to 453 are Virion surface-facing; sequence NIISIWISHS…GAELPFTIDK (426 aa). Residues 36-74 form a hypervariable stalk region region; sequence HSIQTGNQNHTGICNQGIITYNVVAGQDSTSVILTGNSS. N-linked (GlcNAc...) asparagine; by host glycosylation is found at Asn-44 and Asn-72. Residues 75–453 are head of neuraminidase; sequence LCPIRGWAIH…GAELPFTIDK (379 aa). Intrachain disulfides connect Cys-76–Cys-401, Cys-108–Cys-113, Cys-168–Cys-215, Cys-217–Cys-222, Cys-263–Cys-276, Cys-265–Cys-274, Cys-302–Cys-319, and Cys-405–Cys-430. Arg-102 lines the substrate pocket. The N-linked (GlcNAc...) asparagine; by host glycan is linked to Asn-130. The active-site Proton donor/acceptor is the Asp-135. Residue Arg-136 participates in substrate binding. Asn-219 is a glycosylation site (N-linked (GlcNAc...) asparagine; by host). Residue 261 to 262 coordinates substrate; sequence EE. Residue Arg-277 coordinates substrate. Asp-278, Gly-282, Asp-308, and Asn-328 together coordinate Ca(2+). Arg-352 provides a ligand contact to substrate. The Nucleophile role is filled by Tyr-386.

It belongs to the glycosyl hydrolase 34 family. In terms of assembly, homotetramer. The cofactor is Ca(2+). N-glycosylated.

The protein resides in the virion membrane. The protein localises to the host apical cell membrane. It catalyses the reaction Hydrolysis of alpha-(2-&gt;3)-, alpha-(2-&gt;6)-, alpha-(2-&gt;8)- glycosidic linkages of terminal sialic acid residues in oligosaccharides, glycoproteins, glycolipids, colominic acid and synthetic substrates.. Inhibited by the neuraminidase inhibitors zanamivir (Relenza) and oseltamivir (Tamiflu). These drugs interfere with the release of progeny virus from infected cells and are effective against all influenza strains. Resistance to neuraminidase inhibitors is quite rare. In terms of biological role, unlike other strains, A/WSN/33 neuraminidase binds and activates plasminogen into plasmin in the vicinity of HA so that activated plasmin cleaves HA rendering the virus infectious. Catalyzes the removal of terminal sialic acid residues from viral and cellular glycoconjugates. Cleaves off the terminal sialic acids on the glycosylated HA during virus budding to facilitate virus release. Additionally helps virus spread through the circulation by further removing sialic acids from the cell surface. These cleavages prevent self-aggregation and ensure the efficient spread of the progeny virus from cell to cell. Otherwise, infection would be limited to one round of replication. Described as a receptor-destroying enzyme because it cleaves a terminal sialic acid from the cellular receptors. May facilitate viral invasion of the upper airways by cleaving the sialic acid moieties on the mucin of the airway epithelial cells. Likely to plays a role in the budding process through its association with lipid rafts during intracellular transport. May additionally display a raft-association independent effect on budding. Plays a role in the determination of host range restriction on replication and virulence. Sialidase activity in late endosome/lysosome traffic seems to enhance virus replication. In Influenza A virus (strain A/Wilson-Smith/1933 H1N1) (Influenza A virus (strain A/WS/1933 H1N1)), this protein is Neuraminidase.